Reading from the N-terminus, the 2157-residue chain is Polyketide synthase 2 (2157 aa).

The N-terminal acylcarrier protein transacylase domain (SAT) stretch occupies residues 7–244; it reads FIFGDQTGGF…IPIPIWAPYH (238 aa). The region spanning 374 to 807 is the Ketosynthase family 3 (KS3) domain; sequence DAKIAIIGMS…GGNSALLLED (434 aa). Residues C546, H681, and H723 each act as for beta-ketoacyl synthase activity in the active site. A malonyl-CoA:ACP transacylase (MAT) domain region spans residues 908-1213; sequence GFVFSGQGAQ…ASLHRKDDGW (306 aa). Residue S998 is the For acyl/malonyl transferase activity of the active site. The product template (PT) domain stretch occupies residues 1290–1605; that stretch reads TSSVQKIIQQ…RSLLNKVLPP (316 aa). An N-terminal hotdog fold region spans residues 1294 to 1428; sequence QKIIQQTDGP…CLLCFADPNS (135 aa). The region spanning 1294–1600 is the PKS/mFAS DH domain; it reads QKIIQQTDGP…FLGMSRSLLN (307 aa). H1327 functions as the Proton acceptor; for dehydratase activity in the catalytic mechanism. The interval 1455–1600 is C-terminal hotdog fold; that stretch reads TDSLLSKGIV…FLGMSRSLLN (146 aa). The active-site Proton donor; for dehydratase activity is D1514. The segment at 1629–1653 is disordered; it reads AKDTERRPLDIPTRAQRQPNSPPTG. Residues 1649–1726 enclose the Carrier 1 domain; that stretch reads SPPTGTLGRI…ELKEFLGADQ (78 aa). S1686 is subject to O-(pantetheine 4'-phosphoryl)serine. The tract at residues 1729–1765 is disordered; it reads DDAVACESSNGQHTPQTSDKGSGTLAAQKPDDDTGSD. Residues 1735 to 1749 show a composition bias toward polar residues; that stretch reads ESSNGQHTPQTSDKG. The Carrier 2 domain occupies 1765 to 1839; the sequence is DTTLHRVCAI…SLQKALCGTE (75 aa). S1799 is modified (O-(pantetheine 4'-phosphoryl)serine). Residues 1875–2151 form a thioesterase (TE) domain region; that stretch reads ASPPHATSIL…MAEMGDLIGE (277 aa). S1981 functions as the For thioesterase activity in the catalytic mechanism.

Its function is as follows. Polyketide synthase; part of the Pks2 gene cluster that mediates the formation of infectious structures (appressoria), enabling these fungi to kill insects faster. The product of the Pks2 gene cluster is different from the one of Pks1 and has still not been identified. This chain is Polyketide synthase 2, found in Metarhizium guizhouense (strain ARSEF 977).